We begin with the raw amino-acid sequence, 208 residues long: Large ribosomal subunit protein bL25 (208 aa).

Residues 1–21 are disordered; it reads MSNEFSLNAEKRDVQGKGASR.

It belongs to the bacterial ribosomal protein bL25 family. CTC subfamily. In terms of assembly, part of the 50S ribosomal subunit; part of the 5S rRNA/L5/L18/L25 subcomplex. Contacts the 5S rRNA. Binds to the 5S rRNA independently of L5 and L18.

This is one of the proteins that binds to the 5S RNA in the ribosome where it forms part of the central protuberance. The sequence is that of Large ribosomal subunit protein bL25 from Hahella chejuensis (strain KCTC 2396).